Here is a 349-residue protein sequence, read N- to C-terminus: 4-hydroxy-3-methylbut-2-en-1-yl diphosphate synthase (flavodoxin) (349 aa).

[4Fe-4S] cluster contacts are provided by Cys-265, Cys-268, Cys-300, and Glu-307.

The protein belongs to the IspG family. It depends on [4Fe-4S] cluster as a cofactor.

It carries out the reaction (2E)-4-hydroxy-3-methylbut-2-enyl diphosphate + oxidized [flavodoxin] + H2O + 2 H(+) = 2-C-methyl-D-erythritol 2,4-cyclic diphosphate + reduced [flavodoxin]. The protein operates within isoprenoid biosynthesis; isopentenyl diphosphate biosynthesis via DXP pathway; isopentenyl diphosphate from 1-deoxy-D-xylulose 5-phosphate: step 5/6. Converts 2C-methyl-D-erythritol 2,4-cyclodiphosphate (ME-2,4cPP) into 1-hydroxy-2-methyl-2-(E)-butenyl 4-diphosphate. In Thermodesulfovibrio yellowstonii (strain ATCC 51303 / DSM 11347 / YP87), this protein is 4-hydroxy-3-methylbut-2-en-1-yl diphosphate synthase (flavodoxin).